A 152-amino-acid chain; its full sequence is 3-hydroxyacyl-[acyl-carrier-protein] dehydratase FabZ (152 aa).

Residue His58 is part of the active site.

This sequence belongs to the thioester dehydratase family. FabZ subfamily.

The protein resides in the cytoplasm. It carries out the reaction a (3R)-hydroxyacyl-[ACP] = a (2E)-enoyl-[ACP] + H2O. Its function is as follows. Involved in unsaturated fatty acids biosynthesis. Catalyzes the dehydration of short chain beta-hydroxyacyl-ACPs and long chain saturated and unsaturated beta-hydroxyacyl-ACPs. The polypeptide is 3-hydroxyacyl-[acyl-carrier-protein] dehydratase FabZ (Prochlorococcus marinus (strain MIT 9215)).